The sequence spans 140 residues: Nucleoside diphosphate kinase (140 aa).

The ATP site is built by lysine 11, phenylalanine 59, arginine 87, threonine 93, arginine 104, and asparagine 114. The Pros-phosphohistidine intermediate role is filled by histidine 117.

This sequence belongs to the NDK family. Homotetramer. Mg(2+) is required as a cofactor.

The protein resides in the cytoplasm. The catalysed reaction is a 2'-deoxyribonucleoside 5'-diphosphate + ATP = a 2'-deoxyribonucleoside 5'-triphosphate + ADP. It carries out the reaction a ribonucleoside 5'-diphosphate + ATP = a ribonucleoside 5'-triphosphate + ADP. Functionally, major role in the synthesis of nucleoside triphosphates other than ATP. The ATP gamma phosphate is transferred to the NDP beta phosphate via a ping-pong mechanism, using a phosphorylated active-site intermediate. The polypeptide is Nucleoside diphosphate kinase (Rhodovulum sulfidophilum (Rhodobacter sulfidophilus)).